The primary structure comprises 417 residues: Peptidyl-Asp metalloendopeptidase (417 aa).

Positions 1–25 (MLSRSIGKAAGGLVLGLSVAAAAHA) are cleaved as a signal peptide. Residue His-327 coordinates Zn(2+). Glu-328 is an active-site residue. 2 residues coordinate Zn(2+): His-331 and His-337.

The protein belongs to the peptidase M72 family. It depends on Zn(2+) as a cofactor.

The catalysed reaction is Cleavage of Xaa-|-Asp, Xaa-|-Glu and Xaa-|-cysteic acid bonds.. Metalloprotease, specifically cleaves on the N-terminal side of aspartyl, glutamyl and cysteic acid residues. The sequence is that of Peptidyl-Asp metalloendopeptidase from Stenotrophomonas maltophilia (strain R551-3).